The primary structure comprises 1529 residues: Ras guanine nucleotide exchange factor B (1529 aa).

The stretch at 135-186 forms a coiled coil; that stretch reads ISNIEKQLSNLVNLKSNTTEQTDRKYKTNLIDFKESIIQLEKDCKNLLKQSN. 5 disordered regions span residues 290-357, 576-600, 680-724, 847-948, and 1168-1206; these read INTL…ISIN, TTTT…KSSH, KRNT…HIQQ, MGKE…NHNR, and QPPQ…STNL. 3 stretches are compositionally biased toward low complexity: residues 576–591, 683–724, and 853–887; these read TTTT…TTTN, TSSG…HIQQ, and NSNT…NNNE. 2 coiled-coil regions span residues 722–798 and 871–898; these read IQQI…LNRK and NNNN…ETNK. The segment covering 888–898 has biased composition (basic and acidic residues); sequence NKNENKNETNK. Low complexity-rich tracts occupy residues 906 to 916, 924 to 940, 1168 to 1187, and 1197 to 1206; these read SSTSTLSSSTT, SSTN…LLPP, QPPQ…TTQP, and QPQLQQSTNL. Residues 1075–1205 form the N-terminal Ras-GEF domain; it reads FYRSIKYASL…PQPQLQQSTN (131 aa). A Ras-GEF domain is found at 1282–1517; that stretch reads SSTDIAEQLT…YEQSILLEPK (236 aa).

The protein localises to the cytoplasm. Functionally, promotes the exchange of Ras-bound GDP by GTP. Involved in phagocytosis, fluid-phase endocytosis, regulation of macropinocytosis and control of cell movement. This Dictyostelium discoideum (Social amoeba) protein is Ras guanine nucleotide exchange factor B (gefB).